The following is a 165-amino-acid chain: E3 ubiquitin ligase complex SCF subunit sconC (165 aa).

The interaction with the F-box domain of F-box proteins stretch occupies residues 106-165 (ILAANYLDIKALLDVGCKTVANMIKGKSPEEIRKTFNIQNDFTPEEEDQIRRENEWAEDR).

Belongs to the SKP1 family. In terms of assembly, component of the SCF (SKP1-CUL1-F-box protein) E3 ubiquitin ligase complexes.

The protein operates within protein modification; protein ubiquitination. Its function is as follows. Essential component of the SCF (SKP1-CUL1-F-box protein) E3 ubiquitin ligase complexes, which mediate the ubiquitination and subsequent proteasomal degradation of target proteins. Controls sulfur metabolite repression, probably by mediating the inactivation or degradation of the metR transcription factor. The chain is E3 ubiquitin ligase complex SCF subunit sconC (sconC) from Arthroderma otae (strain ATCC MYA-4605 / CBS 113480) (Microsporum canis).